The chain runs to 161 residues: Cytochrome c-type biogenesis protein CcmE (161 aa).

At 1–8 (MNPRRKKR) the chain is on the cytoplasmic side. Residues 9-29 (LTLAVALVFGLGATIGLMLYA) traverse the membrane as a helical; Signal-anchor for type II membrane protein segment. The Periplasmic segment spans residues 30 to 161 (LSQNMDLFYT…SDEQKQGRVQ (132 aa)). Residues histidine 129 and tyrosine 133 each coordinate heme.

It belongs to the CcmE/CycJ family.

It localises to the cell inner membrane. Heme chaperone required for the biogenesis of c-type cytochromes. Transiently binds heme delivered by CcmC and transfers the heme to apo-cytochromes in a process facilitated by CcmF and CcmH. This Photobacterium profundum (strain SS9) protein is Cytochrome c-type biogenesis protein CcmE.